Consider the following 324-residue polypeptide: Glyoxylate/hydroxypyruvate reductase B (324 aa).

Active-site residues include Arg237 and Glu266. Residue His285 is the Proton donor of the active site.

The protein belongs to the D-isomer specific 2-hydroxyacid dehydrogenase family. GhrB subfamily. In terms of assembly, homodimer.

Its subcellular location is the cytoplasm. It catalyses the reaction glycolate + NADP(+) = glyoxylate + NADPH + H(+). The catalysed reaction is (R)-glycerate + NAD(+) = 3-hydroxypyruvate + NADH + H(+). The enzyme catalyses (R)-glycerate + NADP(+) = 3-hydroxypyruvate + NADPH + H(+). Functionally, catalyzes the NADPH-dependent reduction of glyoxylate and hydroxypyruvate into glycolate and glycerate, respectively. The protein is Glyoxylate/hydroxypyruvate reductase B of Citrobacter koseri (strain ATCC BAA-895 / CDC 4225-83 / SGSC4696).